We begin with the raw amino-acid sequence, 433 residues long: Enolase (433 aa).

Gln-167 is a (2R)-2-phosphoglycerate binding site. Glu-209 (proton donor) is an active-site residue. Positions 246, 291, and 318 each coordinate Mg(2+). Residues Lys-343, Arg-372, Ser-373, and Lys-394 each coordinate (2R)-2-phosphoglycerate. Catalysis depends on Lys-343, which acts as the Proton acceptor.

This sequence belongs to the enolase family. In terms of assembly, component of the RNA degradosome, a multiprotein complex involved in RNA processing and mRNA degradation. Mg(2+) serves as cofactor.

It localises to the cytoplasm. The protein localises to the secreted. It is found in the cell surface. It carries out the reaction (2R)-2-phosphoglycerate = phosphoenolpyruvate + H2O. Its pathway is carbohydrate degradation; glycolysis; pyruvate from D-glyceraldehyde 3-phosphate: step 4/5. Its function is as follows. Catalyzes the reversible conversion of 2-phosphoglycerate (2-PG) into phosphoenolpyruvate (PEP). It is essential for the degradation of carbohydrates via glycolysis. This chain is Enolase, found in Photobacterium profundum (strain SS9).